Reading from the N-terminus, the 374-residue chain is Alanine racemase (374 aa).

The Proton acceptor; specific for D-alanine role is filled by Lys40. Lys40 is modified (N6-(pyridoxal phosphate)lysine). Arg136 contributes to the substrate binding site. Residue Tyr264 is the Proton acceptor; specific for L-alanine of the active site. Position 311 (Met311) interacts with substrate.

This sequence belongs to the alanine racemase family. Requires pyridoxal 5'-phosphate as cofactor.

The enzyme catalyses L-alanine = D-alanine. It participates in amino-acid biosynthesis; D-alanine biosynthesis; D-alanine from L-alanine: step 1/1. Its function is as follows. Catalyzes the interconversion of L-alanine and D-alanine. May also act on other amino acids. The protein is Alanine racemase (alr) of Pediococcus pentosaceus (strain ATCC 25745 / CCUG 21536 / LMG 10740 / 183-1w).